Here is a 512-residue protein sequence, read N- to C-terminus: MKEYQIHLELDRSQQHNFLYPLLFREYIYALAHDHGLNRSTIPLENGGYDNKSSSLSVKRLISRTYQRIHLSIYAKDSNPNQFIGHNNKFYSQMISEGFSVIVEIPFSLRLVAFLEGKEMAKSQNFQSIHSIFPFFENNFSHLHYVLDVLIPYPIRPEILVRTFRYWVKDASSLHLLRFFLHEYFNWNSLITPKKSNSIFSTRNPRFFLFLYNSHVYEYESIFFFLRNQSSHLRSTSSGPLFERISFYGKVEDLVQVFVNDFQDNLWLFKHPIMHYVRYQGKSVLASKDMPLLMNKWKYYLVNLWQWHFHVWSQPGRIHINHLYKDYIDFLGYLSRGRLNTLVVRSQMLENAFLIDNAMKQFETTVPIIPLIGSLTTARFCNSLGHPISKPTWADSSDSYIIDRFMRICRNLSHYHSGSSKKKSLYRIKYILRVSCVKSLVRKHKSTVRVFLKRLGSEFLEEFFTEEEHVLSLIFPRALFTSRRLYRGRVWYLDIICINDLVNHDKLEIVPN.

It belongs to the intron maturase 2 family. MatK subfamily.

It localises to the plastid. The protein localises to the chloroplast. In terms of biological role, usually encoded in the trnK tRNA gene intron. Probably assists in splicing its own and other chloroplast group II introns. The protein is Maturase K of Acer platanoides (Norway maple).